The primary structure comprises 399 residues: Formate-dependent phosphoribosylglycinamide formyltransferase (399 aa).

Residues 8–9 and Glu-68 contribute to the N(1)-(5-phospho-beta-D-ribosyl)glycinamide site; that span reads EL. Residues Arg-100, Lys-141, 146-151, 185-188, and Glu-193 each bind ATP; these read SSGHGQ and EALA. The 204-residue stretch at 105–308 folds into the ATP-grasp domain; that stretch reads VLAHEELGLP…EFALHARAIL (204 aa). Positions 266 and 279 each coordinate Mg(2+). Residues Asp-286, Lys-361, and 368–369 contribute to the N(1)-(5-phospho-beta-D-ribosyl)glycinamide site; that span reads RR.

This sequence belongs to the PurK/PurT family. As to quaternary structure, homodimer.

It carries out the reaction N(1)-(5-phospho-beta-D-ribosyl)glycinamide + formate + ATP = N(2)-formyl-N(1)-(5-phospho-beta-D-ribosyl)glycinamide + ADP + phosphate + H(+). It participates in purine metabolism; IMP biosynthesis via de novo pathway; N(2)-formyl-N(1)-(5-phospho-D-ribosyl)glycinamide from N(1)-(5-phospho-D-ribosyl)glycinamide (formate route): step 1/1. Functionally, involved in the de novo purine biosynthesis. Catalyzes the transfer of formate to 5-phospho-ribosyl-glycinamide (GAR), producing 5-phospho-ribosyl-N-formylglycinamide (FGAR). Formate is provided by PurU via hydrolysis of 10-formyl-tetrahydrofolate. In Bifidobacterium longum (strain NCC 2705), this protein is Formate-dependent phosphoribosylglycinamide formyltransferase.